The primary structure comprises 616 residues: tRNA 5-methylaminomethyl-2-thiouridine biosynthesis bifunctional protein MnmC (616 aa).

The segment at 1–232 (MLRTIVPARL…KRHCMSARFA (232 aa)) is tRNA (mnm(5)s(2)U34)-methyltransferase. The interval 249 to 616 (IGGGVAGAAA…ARFAGNRKTA (368 aa)) is FAD-dependent cmnm(5)s(2)U34 oxidoreductase.

It in the N-terminal section; belongs to the methyltransferase superfamily. tRNA (mnm(5)s(2)U34)-methyltransferase family. The protein in the C-terminal section; belongs to the DAO family. FAD is required as a cofactor.

The protein localises to the cytoplasm. It catalyses the reaction 5-aminomethyl-2-thiouridine(34) in tRNA + S-adenosyl-L-methionine = 5-methylaminomethyl-2-thiouridine(34) in tRNA + S-adenosyl-L-homocysteine + H(+). Catalyzes the last two steps in the biosynthesis of 5-methylaminomethyl-2-thiouridine (mnm(5)s(2)U) at the wobble position (U34) in tRNA. Catalyzes the FAD-dependent demodification of cmnm(5)s(2)U34 to nm(5)s(2)U34, followed by the transfer of a methyl group from S-adenosyl-L-methionine to nm(5)s(2)U34, to form mnm(5)s(2)U34. In Thiobacillus denitrificans (strain ATCC 25259 / T1), this protein is tRNA 5-methylaminomethyl-2-thiouridine biosynthesis bifunctional protein MnmC.